A 342-amino-acid chain; its full sequence is Holliday junction branch migration complex subunit RuvB (342 aa).

The interval 1–179 (MTNILSPEKS…FGIPMRLNFY (179 aa)) is large ATPase domain (RuvB-L). ATP is bound by residues Ile-18, Arg-19, Gly-60, Lys-63, Thr-64, Thr-65, 126-128 (EDF), Arg-169, Tyr-179, and Arg-216. A Mg(2+)-binding site is contributed by Thr-64. Positions 180 to 250 (NTEELKKVLN…ISDFGLKRLE (71 aa)) are small ATPAse domain (RuvB-S). The head domain (RuvB-H) stretch occupies residues 253–342 (RIGLDSNDYR…HQFNIFNENE (90 aa)). The DNA site is built by Arg-289, Arg-308, and Arg-313.

This sequence belongs to the RuvB family. As to quaternary structure, homohexamer. Forms an RuvA(8)-RuvB(12)-Holliday junction (HJ) complex. HJ DNA is sandwiched between 2 RuvA tetramers; dsDNA enters through RuvA and exits via RuvB. An RuvB hexamer assembles on each DNA strand where it exits the tetramer. Each RuvB hexamer is contacted by two RuvA subunits (via domain III) on 2 adjacent RuvB subunits; this complex drives branch migration. In the full resolvosome a probable DNA-RuvA(4)-RuvB(12)-RuvC(2) complex forms which resolves the HJ.

The protein localises to the cytoplasm. The catalysed reaction is ATP + H2O = ADP + phosphate + H(+). Functionally, the RuvA-RuvB-RuvC complex processes Holliday junction (HJ) DNA during genetic recombination and DNA repair, while the RuvA-RuvB complex plays an important role in the rescue of blocked DNA replication forks via replication fork reversal (RFR). RuvA specifically binds to HJ cruciform DNA, conferring on it an open structure. The RuvB hexamer acts as an ATP-dependent pump, pulling dsDNA into and through the RuvAB complex. RuvB forms 2 homohexamers on either side of HJ DNA bound by 1 or 2 RuvA tetramers; 4 subunits per hexamer contact DNA at a time. Coordinated motions by a converter formed by DNA-disengaged RuvB subunits stimulates ATP hydrolysis and nucleotide exchange. Immobilization of the converter enables RuvB to convert the ATP-contained energy into a lever motion, pulling 2 nucleotides of DNA out of the RuvA tetramer per ATP hydrolyzed, thus driving DNA branch migration. The RuvB motors rotate together with the DNA substrate, which together with the progressing nucleotide cycle form the mechanistic basis for DNA recombination by continuous HJ branch migration. Branch migration allows RuvC to scan DNA until it finds its consensus sequence, where it cleaves and resolves cruciform DNA. This chain is Holliday junction branch migration complex subunit RuvB, found in Rickettsia peacockii (strain Rustic).